A 521-amino-acid polypeptide reads, in one-letter code: Lysine--tRNA ligase (521 aa).

A 'HIGH' region motif is present at residues Pro32–Asn40. The 'KMSKS' region motif lies at Lys280–Ser284.

This sequence belongs to the class-I aminoacyl-tRNA synthetase family.

It is found in the cytoplasm. The catalysed reaction is tRNA(Lys) + L-lysine + ATP = L-lysyl-tRNA(Lys) + AMP + diphosphate. This chain is Lysine--tRNA ligase (lysS), found in Borreliella burgdorferi (strain ATCC 35210 / DSM 4680 / CIP 102532 / B31) (Borrelia burgdorferi).